Reading from the N-terminus, the 76-residue chain is uncharacterized protein (76 aa).

The chain crosses the membrane as a helical span at residues Leu-12–Ser-32.

It localises to the cell membrane. This is an uncharacterized protein from Escherichia coli O157:H7.